The sequence spans 255 residues: tRNA (guanine-N(1)-)-methyltransferase (255 aa).

Residues G117 and 137 to 142 (LGDFVL) each bind S-adenosyl-L-methionine.

This sequence belongs to the RNA methyltransferase TrmD family. In terms of assembly, homodimer.

The protein localises to the cytoplasm. It catalyses the reaction guanosine(37) in tRNA + S-adenosyl-L-methionine = N(1)-methylguanosine(37) in tRNA + S-adenosyl-L-homocysteine + H(+). Specifically methylates guanosine-37 in various tRNAs. The polypeptide is tRNA (guanine-N(1)-)-methyltransferase (Paraburkholderia xenovorans (strain LB400)).